The primary structure comprises 815 residues: MFMSSSSSSHARRPQLSSFSYLHPPLPFPGLSFSSTRDKRVNFDSTRIISIAKSKPARTTPEYSDVLQTGLPLIVEDDIQEQEEPLEVSLENQIRQGVDIVKSMLGSIEDGEISISAYDTAWVALVENIHHPGSPQFPSTLQWIANNQLPDSSWGDPDMFLTHDRLINTLACVIALKKWNIHPRKCKRGLSFVKENISKLAKEDEEHMLIGFEIAFPSLLEMAKKLGIEIPDDCPAMQDIYTKKDLKLTRIPRDIMHNVPTTLLYSLEGLPSLDWEKLVKLQCQDGSFLFSPSSTACALMHTKDGNCFSYLNNLVHKFNGGVPNVYPVDLFEHIWSVDRLLRLGISRFFRPEIKECLEYVHRYWTKDGICWARNSNVQDIDDTSMGFRLLRLHGYEVSPDVFKQFKKGNEFVCVVGQSDQAITGIYNLYRASQLMFPKETILHGAKEFAGNFLRKKRTANELLDKWIITKDLPGEVGFALDVPWYACLPRVETRLYIEQYGGQDDVWIGKTLYRMPYVNNNVYLELAKLDYNNCQSLHRIEWDNIQKWYEEYNVGGFGVSKRGLLKTYFVATASIFEPERSVERLAWAKTAILVETIRSYFGNSREERIAFPNEFQKAKTRGYINGRRLDGKQATKGLIEMVFATLNHLSQDALVVHGQDITPHLYQSWEKWVLTWQEGGDRGEGEAELLVQTINLMAGHTHSQEEELLYERLFKLTNTVCHQLGHYHHLNKDKQPQQVQDNGGYNNSNPESISKLQIESDMRELVQLVLNSSDGMDSNIKQTFLTVTKSFYYTAFTHPGTVNYHIAKVLFERVV.

Residues 1-50 (MFMSSSSSSHARRPQLSSFSYLHPPLPFPGLSFSSTRDKRVNFDSTRIIS) constitute a chloroplast transit peptide. Substrate is bound at residue Lys247. Residues Asp379 and Asp381 each contribute to the Mg(2+) site. A DXDD motif motif is present at residues 379–382 (DIDD). Lys465 lines the substrate pocket.

The protein belongs to the terpene synthase family. Tpsc subfamily. Requires Mg(2+) as cofactor.

The protein localises to the plastid. It is found in the chloroplast. The enzyme catalyses (2E,6E,10E)-geranylgeranyl diphosphate = (-)-kolavenyl diphosphate. Inhibited by high concentrations of magnesium. In terms of biological role, diterpene synthase that catalyzes the formation of (-)-kolavenyl diphosphate from geranylgeranyl diphosphate (GGPP). The chain is (-)-kolavenyl diphosphate synthase TPS10, chloroplastic from Tripterygium wilfordii (Thunder God vine).